The chain runs to 205 residues: dITP/XTP pyrophosphatase (205 aa).

Substrate is bound at residue 8-13; sequence SGNKGK. Asp-69 functions as the Proton acceptor in the catalytic mechanism. Asp-69 contributes to the Mg(2+) binding site. Substrate is bound by residues Ser-70, 153–156, Lys-176, and 181–182; these read HGYD and HR.

The protein belongs to the HAM1 NTPase family. In terms of assembly, homodimer. It depends on Mg(2+) as a cofactor.

It carries out the reaction XTP + H2O = XMP + diphosphate + H(+). It catalyses the reaction dITP + H2O = dIMP + diphosphate + H(+). The enzyme catalyses ITP + H2O = IMP + diphosphate + H(+). Functionally, pyrophosphatase that catalyzes the hydrolysis of nucleoside triphosphates to their monophosphate derivatives, with a high preference for the non-canonical purine nucleotides XTP (xanthosine triphosphate), dITP (deoxyinosine triphosphate) and ITP. Seems to function as a house-cleaning enzyme that removes non-canonical purine nucleotides from the nucleotide pool, thus preventing their incorporation into DNA/RNA and avoiding chromosomal lesions. This chain is dITP/XTP pyrophosphatase, found in Shewanella oneidensis (strain ATCC 700550 / JCM 31522 / CIP 106686 / LMG 19005 / NCIMB 14063 / MR-1).